A 365-amino-acid polypeptide reads, in one-letter code: Aminomethyltransferase (365 aa).

This sequence belongs to the GcvT family. The glycine cleavage system is composed of four proteins: P, T, L and H.

It carries out the reaction N(6)-[(R)-S(8)-aminomethyldihydrolipoyl]-L-lysyl-[protein] + (6S)-5,6,7,8-tetrahydrofolate = N(6)-[(R)-dihydrolipoyl]-L-lysyl-[protein] + (6R)-5,10-methylene-5,6,7,8-tetrahydrofolate + NH4(+). Functionally, the glycine cleavage system catalyzes the degradation of glycine. This Aeromonas hydrophila subsp. hydrophila (strain ATCC 7966 / DSM 30187 / BCRC 13018 / CCUG 14551 / JCM 1027 / KCTC 2358 / NCIMB 9240 / NCTC 8049) protein is Aminomethyltransferase.